The primary structure comprises 865 residues: Chitin synthase 3 (865 aa).

Residues M1–S59 are disordered. Over residues P23 to L34 the composition is skewed to basic and acidic residues. A compositionally biased stretch (polar residues) spans H36–Y45. N-linked (GlcNAc...) asparagine glycosylation is found at N64, N95, and N538. The next 3 helical transmembrane spans lie at F565 to L585, I620 to A640, and V650 to S670. N682 carries N-linked (GlcNAc...) asparagine glycosylation. The next 3 helical transmembrane spans lie at I707–M727, S735–F755, and L837–L857.

The protein belongs to the chitin synthase family. Class III subfamily.

It localises to the cell membrane. The catalysed reaction is [(1-&gt;4)-N-acetyl-beta-D-glucosaminyl](n) + UDP-N-acetyl-alpha-D-glucosamine = [(1-&gt;4)-N-acetyl-beta-D-glucosaminyl](n+1) + UDP + H(+). Its function is as follows. Polymerizes chitin, a structural polymer of the cell wall and septum, by transferring the sugar moiety of UDP-GlcNAc to the non-reducing end of the growing chitin polymer. Is not only stable at different pH, but is also able to tolerate a broad temperature range. With CHS2, plays an important role in virulence. In Exophiala dermatitidis (strain ATCC 34100 / CBS 525.76 / NIH/UT8656) (Black yeast), this protein is Chitin synthase 3.